We begin with the raw amino-acid sequence, 509 residues long: Histidine ammonia-lyase (509 aa).

A cross-link (5-imidazolinone (Ala-Gly)) is located at residues 144–146 (ASG). A 2,3-didehydroalanine (Ser) modification is found at serine 145.

It belongs to the PAL/histidase family. In terms of processing, contains an active site 4-methylidene-imidazol-5-one (MIO), which is formed autocatalytically by cyclization and dehydration of residues Ala-Ser-Gly.

Its subcellular location is the cytoplasm. The catalysed reaction is L-histidine = trans-urocanate + NH4(+). Its pathway is amino-acid degradation; L-histidine degradation into L-glutamate; N-formimidoyl-L-glutamate from L-histidine: step 1/3. In Rhodospirillum centenum (strain ATCC 51521 / SW), this protein is Histidine ammonia-lyase.